Reading from the N-terminus, the 431-residue chain is Na(+)/H(+) antiporter NhaA 1 (431 aa).

The next 11 helical transmembrane spans lie at 17 to 37, 56 to 76, 98 to 118, 123 to 143, 154 to 174, 182 to 202, 209 to 229, 301 to 321, 329 to 349, 373 to 393, and 400 to 420; these read LSGI…NSNF, FIIS…LFFL, MFPF…YIAL, FIGF…MLIL, LFLV…VATV, EYFL…YFDV, LFLG…ATIA, FSAF…LLDF, MIVL…IFGF, VGFI…LAFI, and AIKI…MILI.

The protein belongs to the NhaA Na(+)/H(+) (TC 2.A.33) antiporter family.

The protein localises to the cell inner membrane. The catalysed reaction is Na(+)(in) + 2 H(+)(out) = Na(+)(out) + 2 H(+)(in). Na(+)/H(+) antiporter that extrudes sodium in exchange for external protons. This chain is Na(+)/H(+) antiporter NhaA 1, found in Aliarcobacter butzleri (strain RM4018) (Arcobacter butzleri).